Consider the following 553-residue polypeptide: MNPSTALARVLVDELARLGLTEAVIAPGSRSTPLALALVADTRIRTHVRIDERSASFLAVGLARASRRPVALVCTSGTAAANFHPAVLEADQSGVSLIVLTADRPPELRGTGANQTVNQIGLYGSAVRFFAEVGVPEREAGMVAYWRSLVCRAWAAAQANKPGPVHLNLAFREPLVPEPGGQPWPEPVTGRPDGKPWITVDLQRNEPEPVELPWVERGVIVCGDGDYDPIPLLALSAQTGWPLLAEPTSNARRAEALSSYRQLLAVPEFVAAHEPELVVSVGRPGLSRQLLAYLRRAPRHVVVGDPVAFADPVRTATDVVGAVTAPPSATPDTAWAASWAAAEAAARAAADRLLDSDETLSELRLARDLAAHLPAGSLLFAGASMPIRDLDAVMRPRCGLRLIGNRGVSGIDGTVSTAVGAALAHQADGGGEAFALLGDLALLHDQNGLLLGPDEPRPNLTIVVVNNDGGGIFSELEQAGHPDFERVFGTPHGVAVEQVAATAGLPYTRVEWATDLPKALIGDGLRLVEVRTDRAASARLRRALQEAVAAAVR.

The protein belongs to the TPP enzyme family. MenD subfamily. Homodimer. The cofactor is Mg(2+). It depends on Mn(2+) as a cofactor. Thiamine diphosphate serves as cofactor.

It carries out the reaction isochorismate + 2-oxoglutarate + H(+) = 5-enolpyruvoyl-6-hydroxy-2-succinyl-cyclohex-3-ene-1-carboxylate + CO2. Its pathway is quinol/quinone metabolism; 1,4-dihydroxy-2-naphthoate biosynthesis; 1,4-dihydroxy-2-naphthoate from chorismate: step 2/7. The protein operates within quinol/quinone metabolism; menaquinone biosynthesis. In terms of biological role, catalyzes the thiamine diphosphate-dependent decarboxylation of 2-oxoglutarate and the subsequent addition of the resulting succinic semialdehyde-thiamine pyrophosphate anion to isochorismate to yield 2-succinyl-5-enolpyruvyl-6-hydroxy-3-cyclohexene-1-carboxylate (SEPHCHC). The polypeptide is 2-succinyl-5-enolpyruvyl-6-hydroxy-3-cyclohexene-1-carboxylate synthase (Thermobifida fusca (strain YX)).